Consider the following 205-residue polypeptide: Outer-membrane lipoprotein LolB (205 aa).

Residues 1-17 (MFLRHVIVFSLIALLTG) form the signal peptide. The N-palmitoyl cysteine moiety is linked to residue C18. C18 carries S-diacylglycerol cysteine lipidation.

Belongs to the LolB family. Monomer.

Its subcellular location is the cell outer membrane. Plays a critical role in the incorporation of lipoproteins in the outer membrane after they are released by the LolA protein. In Pseudomonas syringae pv. syringae (strain B728a), this protein is Outer-membrane lipoprotein LolB.